Consider the following 828-residue polypeptide: USP6 N-terminal-like protein (828 aa).

N-acetylmethionine is present on M1. Residues 100-292 (GIPLQLRGEV…RIWDIYIFEG (193 aa)) enclose the Rab-GAP TBC domain. The segment covering 355 to 367 (DLPEPGKEDEYPK) has biased composition (basic and acidic residues). The interval 355–722 (DLPEPGKEDE…NSGSPKNGKL (368 aa)) is disordered. Phosphoserine occurs at positions 391, 396, and 400. Basic and acidic residues predominate over residues 434–451 (KSVEEESKKLKDEADFQR). Residues 465–478 (NHAAANQNSNATSN) show a composition bias toward low complexity. Composition is skewed to basic and acidic residues over residues 498–508 (RTAKYTMEGKG) and 535–544 (KALDAEDGKR). S546 and S549 each carry phosphoserine. Y582 carries the phosphotyrosine modification. Phosphoserine is present on S585. The segment covering 592 to 603 (PSSSPSKVSNKF) has biased composition (polar residues). S642, S655, S659, S676, and S680 each carry phosphoserine. Polar residues-rich tracts occupy residues 648–666 (TANS…QLNP) and 673–683 (STLSVSASPEK). Residues 686–697 (SRPSPLVLPSSR) are compositionally biased toward low complexity. S716 carries the post-translational modification Phosphoserine. Y729 is subject to Phosphotyrosine. The interval 789–817 (KASPAAEDASPSGYPYSGPPPPAYHYRNR) is disordered.

In terms of assembly, interacts with EPS8. In terms of tissue distribution, widely expressed.

Its subcellular location is the golgi apparatus. The protein resides in the cytoplasmic vesicle. Its function is as follows. Acts as a GTPase-activating protein for RAB5A and RAB43. Involved in receptor trafficking. In complex with EPS8 inhibits internalization of EGFR. Involved in retrograde transport from the endocytic pathway to the Golgi apparatus. Involved in the transport of Shiga toxin from early and recycling endosomes to the trans-Golgi network. Required for structural integrity of the Golgi complex. This is USP6 N-terminal-like protein (USP6NL) from Homo sapiens (Human).